Here is an 89-residue protein sequence, read N- to C-terminus: MAHKKAGGSSRNGRDSAGKRLGIKAFGGQIVIPGNIIARQRGTTWHPGLNVGMGTDHTLFAKAEGRVEFRAKTGGRTFVSVIPVAEAAE.

It belongs to the bacterial ribosomal protein bL27 family.

The polypeptide is Large ribosomal subunit protein bL27 (Afipia carboxidovorans (strain ATCC 49405 / DSM 1227 / KCTC 32145 / OM5) (Oligotropha carboxidovorans)).